A 316-amino-acid chain; its full sequence is E3 ubiquitin-protein ligase rnf146 (316 aa).

An RING-type zinc finger spans residues 36-74 (CAICLQTCVHPVSLPCKHIFCYLCVKGASWLGRRCALCR). Residues 91 to 167 (EELKSASRGN…EHGRRRKIKR (77 aa)) form the WWE domain. Residues Y107, R110, W114, Y144, Q153, R163, and K175 each coordinate a glycoprotein. The tract at residues 257–316 (GRNNIGEGEEGQPLINARMPAPSALLEESEPSDSNDHGSPTLQHNSLLVPQSNRLPFGNP) is disordered. The segment covering 293–310 (HGSPTLQHNSLLVPQSNR) has biased composition (polar residues).

It is found in the cytoplasm. The protein resides in the cytosol. It localises to the nucleus. It carries out the reaction S-ubiquitinyl-[E2 ubiquitin-conjugating enzyme]-L-cysteine + [acceptor protein]-L-lysine = [E2 ubiquitin-conjugating enzyme]-L-cysteine + N(6)-ubiquitinyl-[acceptor protein]-L-lysine.. Its pathway is protein modification; protein ubiquitination. Its function is as follows. E3 ubiquitin-protein ligase that specifically binds poly-ADP-ribosylated proteins and mediates their ubiquitination and subsequent degradation. May regulate many important biological processes, such as cell survival and DNA damage response. Acts as an activator of the Wnt signaling pathway by mediating the ubiquitination of poly-ADP-ribosylated proteins. Neuroprotective protein. Protects against cell death induced by DNA damaging agents and rescues cells from G1 arrest. Promotes cell survival after gamma-irradiation. Facilitates DNA repair. In Xenopus tropicalis (Western clawed frog), this protein is E3 ubiquitin-protein ligase rnf146 (rnf146).